The sequence spans 106 residues: Large ribosomal subunit protein uL24 (106 aa).

A disordered region spans residues 1-20 (MNKRAKSKNREPLRKSPVKR). A compositionally biased stretch (basic and acidic residues) spans 8–20 (KNREPLRKSPVKR).

It belongs to the universal ribosomal protein uL24 family. In terms of assembly, part of the 50S ribosomal subunit.

In terms of biological role, one of two assembly initiator proteins, it binds directly to the 5'-end of the 23S rRNA, where it nucleates assembly of the 50S subunit. Functionally, one of the proteins that surrounds the polypeptide exit tunnel on the outside of the subunit. The polypeptide is Large ribosomal subunit protein uL24 (Methylacidiphilum infernorum (isolate V4) (Methylokorus infernorum (strain V4))).